We begin with the raw amino-acid sequence, 219 residues long: Type-5 uracil-DNA glycosylase (219 aa).

[4Fe-4S] cluster is bound by residues Cys13, Cys16, Cys115, and Cys130.

The protein belongs to the uracil-DNA glycosylase (UDG) superfamily. Type 5 (UDGb) family.

Functionally, DNA glycosylase with broad substrate specificity. Can remove uracil from double-stranded DNA containing either a U/G, U/A, U/C or U/T base pair. Can also excise hypoxanthine from double-stranded DNA containing G/I, T/I, and A/I base pairs, xanthine from both double-stranded and single stranded DNA, thymine from G/T mismatched DNA, 5'-hydroxymethyluracil and 5'-fluorouracil. The sequence is that of Type-5 uracil-DNA glycosylase from Thermus thermophilus (strain ATCC 27634 / DSM 579 / HB8).